Reading from the N-terminus, the 347-residue chain is GMP reductase (347 aa).

108–131 (ADFEKTKQILDLNPALNFVCIDVA) contacts NADP(+). Residues glycine 181 and glycine 183 each contribute to the K(+) site. The active-site Thioimidate intermediate is the cysteine 186. 216-239 (IVSDGGCTTPGDVAKAFGGGADFV) provides a ligand contact to NADP(+).

The protein belongs to the IMPDH/GMPR family. GuaC type 1 subfamily. As to quaternary structure, homotetramer.

It catalyses the reaction IMP + NH4(+) + NADP(+) = GMP + NADPH + 2 H(+). Catalyzes the irreversible NADPH-dependent deamination of GMP to IMP. It functions in the conversion of nucleobase, nucleoside and nucleotide derivatives of G to A nucleotides, and in maintaining the intracellular balance of A and G nucleotides. The chain is GMP reductase from Escherichia coli O127:H6 (strain E2348/69 / EPEC).